The primary structure comprises 699 residues: Putative inactive kinesin-like protein KIN-7B (699 aa).

The Kinesin motor domain maps to 1–170 (MRAIQKKSLC…LLFGSCAKEV (170 aa)). The stretch at 179 to 247 (VMSDKALVKH…QSRLQDLLQS (69 aa)) forms a coiled coil. The tract at residues 249 to 345 (GDHDLNRQVQ…VNSRHSRPSG (97 aa)) is disordered. The segment covering 264–275 (RSPPSVGMPPSV) has biased composition (low complexity). Basic and acidic residues predominate over residues 276-298 (SRDDSSQVSHDDSDLYKEVRCIE). Positions 313–338 (GESSSPQDSNMNSGLHGNDSNASVNS) are enriched in polar residues.

It belongs to the TRAFAC class myosin-kinesin ATPase superfamily. Kinesin family. KIN-7 subfamily.

The protein is Putative inactive kinesin-like protein KIN-7B of Oryza sativa subsp. japonica (Rice).